Consider the following 1024-residue polypeptide: E3 ISG15--protein ligase HERC5 (1024 aa).

Over residues 1-13 (MERRSRRKSRRNG) the composition is skewed to basic residues. A disordered region spans residues 1–28 (MERRSRRKSRRNGRSTAGKAAATQPAKS). RCC1 repeat units follow at residues 96–155 (NMKI…ALSK), 156–208 (GGEL…ALSM), 209–260 (SGNI…LLTQ), 262–312 (GLLF…AYVS), and 314–364 (LGKV…LIMI). The 323-residue stretch at 702–1024 (ENEDLRKELW…EAINNNRGFG (323 aa)) folds into the HECT domain. C994 (glycyl thioester intermediate) is an active-site residue.

In terms of assembly, (Microbial infection) Interacts with human cytomegalovirus protein UL26; this interaction inhibits global protein ISGylation. As to quaternary structure, (Microbial infection) Interacts with Kaposi's sarcoma-associated herpesvirus protein v-IRF1; this interaction inhibits global protein ISGylation. Binds to CCNA1, CCNB1, CCND1 and CCNE1. Interacts with UBE2L6. Interacts with IRF3, this interaction is marginal in resting cells but enhanced upon viral infection. Interacts with influenza A virus NS1. ISGylated. In terms of tissue distribution, expressed in testis and to a lesser degree in brain, ovary and placenta. Found in most tissues at low levels.

It localises to the cytoplasm. It is found in the perinuclear region. Major E3 ligase for ISG15 conjugation. Acts as a positive regulator of innate antiviral response in cells induced by interferon. Functions as part of the ISGylation machinery that recognizes target proteins in a broad and relatively non-specific manner. Catalyzes ISGylation of IRF3 which results in sustained activation, it attenuates IRF3-PIN1 interaction, which antagonizes IRF3 ubiquitination and degradation, and boosts the antiviral response. Mediates ISGylation of the phosphatase PTEN leading to its degradation, thus alleviating its suppression of the PI3K-AKT signaling pathway and promoting the production of cytokines that facilitate bacterial clearance. Interferes with the function of key viral structural proteins such as ebolavirus structural protein VP40 or HIV-1 protein GAG. Catalyzes ISGylation of influenza A viral NS1 which attenuates virulence; ISGylated NS1 fails to form homodimers and thus to interact with its RNA targets. Catalyzes ISGylation of papillomavirus type 16 L1 protein which results in dominant-negative effect on virus infectivity. Physically associated with polyribosomes, broadly modifies newly synthesized proteins in a cotranslational manner. In an interferon-stimulated cell, newly translated viral proteins are primary targets of ISG15. Promotes parkin/PRKN ubiquitin E3 ligase activity by suppressing the intramolecular interaction that maintains its autoinhibited conformation. Functionally, (Microbial infection) Functions as an E3 ligase for ISGylation of hepatitis B virus protein X leading to enhanced viral replication due to increased interferon resistance. The polypeptide is E3 ISG15--protein ligase HERC5 (HERC5) (Homo sapiens (Human)).